The following is a 376-amino-acid chain: MSTAGKVIKCKAAVLWEPHKPFTIEDIEVAPPKAHEVRIKMVATGVCRSDDHAVSGSLFTPLPAVLGHEGAGIVESIGEGVTCVKPGDKVIPLFSPQCGKCRICKHPESNLCCQTKNLTQPKGALLDGTSRFSCRGKPIHHFISTSTFSQYTVVDDIAVAKIDAAAPLDKVCLIGCGFSTGYGSAVQVAKVTPGSTCAVFGLGGVGLSVVIGCKTAGAAKIIAVDINKDKFAKAKELGATDCINPQDYTKPIQEVLQEMTDGGVDFSFEVIGRLDTMTSALLSCHSACGVSVIVGVPPSAQSLSVNPMSLLLGRTWKGAIFGGFKSKDAVPKLVADFMAKKFPLEPLITHVLPFEKINEAFDLLRAGKSIRTVLTF.

Serine 2 bears the N-acetylserine mark. Zn(2+) contacts are provided by cysteine 47, histidine 68, cysteine 98, cysteine 101, cysteine 104, cysteine 112, and cysteine 176. NAD(+) contacts are provided by residues 201–206 (GLGGVG), aspartate 225, and lysine 230. An N6-succinyllysine modification is found at lysine 235. 294-296 (VGV) is a binding site for NAD(+). Lysine 341 carries the post-translational modification N6-succinyllysine. Residue arginine 371 coordinates NAD(+).

It belongs to the zinc-containing alcohol dehydrogenase family. Class-I subfamily. As to quaternary structure, dimer of identical or non-identical chains of three types (A, B, C), which are coded by 3 separate genes at different loci. Zn(2+) is required as a cofactor.

The protein resides in the cytoplasm. It catalyses the reaction a primary alcohol + NAD(+) = an aldehyde + NADH + H(+). The catalysed reaction is a secondary alcohol + NAD(+) = a ketone + NADH + H(+). In Rattus norvegicus (Rat), this protein is Alcohol dehydrogenase 1 (Adh1).